Consider the following 85-residue polypeptide: Translation initiation factor IF-1 1 (85 aa).

In terms of domain architecture, S1-like spans 1–72 (MSKEDLIEMQ…NKGRLTFRHI (72 aa)).

Belongs to the IF-1 family. As to quaternary structure, component of the 30S ribosomal translation pre-initiation complex which assembles on the 30S ribosome in the order IF-2 and IF-3, IF-1 and N-formylmethionyl-tRNA(fMet); mRNA recruitment can occur at any time during PIC assembly.

The protein localises to the cytoplasm. In terms of biological role, one of the essential components for the initiation of protein synthesis. Stabilizes the binding of IF-2 and IF-3 on the 30S subunit to which N-formylmethionyl-tRNA(fMet) subsequently binds. Helps modulate mRNA selection, yielding the 30S pre-initiation complex (PIC). Upon addition of the 50S ribosomal subunit IF-1, IF-2 and IF-3 are released leaving the mature 70S translation initiation complex. The chain is Translation initiation factor IF-1 1 from Paracidovorax citrulli (strain AAC00-1) (Acidovorax citrulli).